The following is a 320-amino-acid chain: Cytochrome f (320 aa).

The signal sequence occupies residues 1-35; sequence MQTRKTLSWIKEEITRSISLSLMLSIITHASLSNA. 4 residues coordinate heme: Y36, C56, C59, and H60. A helical membrane pass occupies residues 286–306; that stretch reads VQGLLFFLTSVLLAQIFLVLK.

Belongs to the cytochrome f family. In terms of assembly, the 4 large subunits of the cytochrome b6-f complex are cytochrome b6, subunit IV (17 kDa polypeptide, petD), cytochrome f and the Rieske protein, while the 4 small subunits are PetG, PetL, PetM and PetN. The complex functions as a dimer. Heme serves as cofactor.

It is found in the plastid. The protein resides in the chloroplast thylakoid membrane. Component of the cytochrome b6-f complex, which mediates electron transfer between photosystem II (PSII) and photosystem I (PSI), cyclic electron flow around PSI, and state transitions. In Pelargonium hortorum (Common geranium), this protein is Cytochrome f.